A 185-amino-acid chain; its full sequence is MYCSDPPHPLHLVASDKQQKDHKLILSWKKPTMDSDPLGVFPNSPKYHPYYSQTTEFGGVIDLGLSLRTIQHEIYHSSGQRYCSNEGYRRKWGYVKVTMDGLVVGRKVCVLDHGSYSTLAHQLEDMFGMQSVSGLRLFQMESEFCLVYRDEEGLWRNAGDVPWNEFIESVERLRITRRNDAVLPF.

An EAR-like (transcriptional repression) motif is present at residues 63–67 (LGLSL). The PB1 domain occupies 92–180 (WGYVKVTMDG…ERLRITRRND (89 aa)).

It belongs to the Aux/IAA family. In terms of assembly, homodimers and heterodimers.

The protein resides in the nucleus. In terms of biological role, aux/IAA proteins are short-lived transcriptional factors that function as repressors of early auxin response genes at low auxin concentrations. Repression is thought to result from the interaction with auxin response factors (ARFs), proteins that bind to the auxin-responsive promoter element (AuxRE). Formation of heterodimers with ARF proteins may alter their ability to modulate early auxin response genes expression. The protein is Auxin-responsive protein IAA34 (IAA34) of Arabidopsis thaliana (Mouse-ear cress).